Here is a 952-residue protein sequence, read N- to C-terminus: Probable outer membrane protein pmp16 (952 aa).

Positions 1–27 (MSKTPPKFLFYLGNFTACMFGMTPAVY) are cleaved as a signal peptide. One can recognise an Autotransporter domain in the interval 646–952 (GDLATTPLWQ…HLQAGSTLKF (307 aa)).

The protein belongs to the PMP outer membrane protein family.

The protein resides in the secreted. Its subcellular location is the cell wall. It localises to the cell outer membrane. This Chlamydia pneumoniae (Chlamydophila pneumoniae) protein is Probable outer membrane protein pmp16 (pmp16).